The following is a 355-amino-acid chain: Arginine kinase (355 aa).

The region spanning 6 to 90 (TLEKLEAGFS…FDPIIEDYHN (85 aa)) is the Phosphagen kinase N-terminal domain. 63 to 67 (GVGIY) contributes to the substrate binding site. The Phosphagen kinase C-terminal domain maps to 118–355 (FVVSTRVRCG…AELIKIEKSL (238 aa)). ATP-binding positions include 121 to 125 (STRVR) and His184. Glu224 is a substrate binding site. An ATP-binding site is contributed by Arg228. Cys270 contributes to the substrate binding site. ATP is bound by residues 279-283 (RASVH) and 308-313 (RGTRGE). Glu313 provides a ligand contact to substrate.

Belongs to the ATP:guanido phosphotransferase family.

It catalyses the reaction L-arginine + ATP = N(omega)-phospho-L-arginine + ADP + H(+). The polypeptide is Arginine kinase (ARGK) (Plodia interpunctella (Indianmeal moth)).